A 155-amino-acid chain; its full sequence is SsrA-binding protein (155 aa).

Positions Lys-135 to Tyr-155 are disordered.

The protein belongs to the SmpB family.

The protein localises to the cytoplasm. Required for rescue of stalled ribosomes mediated by trans-translation. Binds to transfer-messenger RNA (tmRNA), required for stable association of tmRNA with ribosomes. tmRNA and SmpB together mimic tRNA shape, replacing the anticodon stem-loop with SmpB. tmRNA is encoded by the ssrA gene; the 2 termini fold to resemble tRNA(Ala) and it encodes a 'tag peptide', a short internal open reading frame. During trans-translation Ala-aminoacylated tmRNA acts like a tRNA, entering the A-site of stalled ribosomes, displacing the stalled mRNA. The ribosome then switches to translate the ORF on the tmRNA; the nascent peptide is terminated with the 'tag peptide' encoded by the tmRNA and targeted for degradation. The ribosome is freed to recommence translation, which seems to be the essential function of trans-translation. The chain is SsrA-binding protein from Trichormus variabilis (strain ATCC 29413 / PCC 7937) (Anabaena variabilis).